A 511-amino-acid polypeptide reads, in one-letter code: MMKMRWLSAAVMLTLYTSSSWAFSIDDVAKQAQSLAGKGYEAPKSNLPSVFRDMKYADYQQIQFNHDKAYWNNLKTPFKLEFYHQGMYFDTPVKINEVTATAVKRIKYSPDYFTFGDVQHDKDTVKDLGFAGFKVLYPINSKDKNDEIVSMLGASYFRVIGAGQVYGLSARGLAIDTALPSGEEFPRFKEFWIERPKPTDKRLTIYALLDSPRATGAYKFVVMPGRDTVVDVQSKIYLRDKVGKLGVAPLTSMFLFGPNQPSPANNYRPELHDSNGLSIHAGNGEWIWRPLNNPKHLAVSSFSMENPQGFGLLQRGRDFSRFEDLDDRYDLRPSAWVTPKGEWGKGSVELVEIPTNDETNDNIVAYWTPDQLPEPGKEMNFKYTITFSRDEDKLHAPDNAWVQQTRRSTGDVKQSNLIRQPDGTIAFVVDFTGAEMKKLPEDTPVTAQTSIGDNGEIVESTVRYNPVTKGWRLVMRVKVKDAKKTTEMRAALVNADQTLSETWSYQLPANE.

Residues 1–22 (MMKMRWLSAAVMLTLYTSSSWA) form the signal peptide.

The protein belongs to the OpgD/OpgG family.

It is found in the periplasm. It functions in the pathway glycan metabolism; osmoregulated periplasmic glucan (OPG) biosynthesis. Involved in the biosynthesis of osmoregulated periplasmic glucans (OPGs). This Escherichia coli O81 (strain ED1a) protein is Glucans biosynthesis protein G.